The sequence spans 261 residues: 3beta-hydroxysteroid dehydrogenase 1 (261 aa).

NAD(+)-binding positions include 65–66 (DV), Asn-92, Tyr-158, and Lys-162. Tyr-158 serves as the catalytic Proton acceptor.

The protein belongs to the short-chain dehydrogenases/reductases (SDR) family.

The enzyme catalyses 3-oxo-5beta-cholan-24-oate + NADH + H(+) = isolithocholate + NAD(+). The catalysed reaction is 12alpha-hydroxy-3-oxo-5beta-cholan-24-oate + NADH + H(+) = isodeoxycholate + NAD(+). It carries out the reaction 7alpha,12alpha-dihydroxy-3-oxo-5beta-cholan-24-oate + NADH + H(+) = isocholate + NAD(+). It catalyses the reaction 3-oxochenodeoxycholate + NADH + H(+) = isochenodeoxycholate + NAD(+). Its function is as follows. Involved in the modification of secondary bile acids into iso-bile acids (3beta-bile acids) via epimerization of the 3-OH group through a 3-oxo-intermediate. Catalyzes the reduction of 12-alpha-hydroxy-3-oxo-5-beta-cholan-24-oate (3-oxo-DCA) and 3-oxo-5-beta-cholan-24-oate (3-oxo-LCA) to yield isodeoxycholate (isoDCA) and isolithocholate (isoLCA), respectively. Is also able to catalyze the reduction of 3-dehydrocholate (3-oxo-CA or 7alpha,12alpha-dihydroxy-3-oxo-5beta-cholan-24-oate) and 7-alpha-hydroxy-3-oxo-5-beta-cholan-24-oate (3-oxo-CDCA), into isocholate (isoCA) and isochenodeoxycholate (isoCDCA), respectively. Prefers NADH to NADPH as cosubstrate. The conversion of the abundant bile acid deoxycholate (DCA) into isoDCA by the gut bacterium E.lenta favors the growth of the keystone commensal genus Bacteroides, since isoDCA is less cytotoxic than its parent compound, DCA; iso-bile acids have thus a potential role in modulating gut community composition. The polypeptide is 3beta-hydroxysteroid dehydrogenase 1 (Eggerthella lenta (strain ATCC 25559 / DSM 2243 / CCUG 17323 / JCM 9979 / KCTC 3265 / NCTC 11813 / VPI 0255 / 1899 B) (Eubacterium lentum)).